The chain runs to 112 residues: Beta-defensin 126 (112 aa).

A signal peptide spans 1-20 (MKSLLFTLAVFMLLAQLVSG). Residues 21–63 (NWYVKKCLNDVGICKKKCKPEELHVKNGRAMCGKQRDCCVPAD) form an in vitro binds to LPS, mediates antimicrobial activity and inhibits LPS-mediated inflammation region. 3 cysteine pairs are disulfide-bonded: cysteine 27/cysteine 58, cysteine 34/cysteine 52, and cysteine 38/cysteine 59.

This sequence belongs to the beta-defensin family. As to quaternary structure, homodimer or homooligomer; disulfide-linked. Post-translationally, O-glycosylated; glycans contain alpha(2,3)-linked sialic acids.

The protein localises to the secreted. In terms of biological role, highly glycosylated atypical beta-defensin involved in several aspects of sperm function. Facilitates sperm transport in the female reproductive tract and contributes to sperm protection against immunodetection; both functions are probably implicating the negative surface charge provided by its O-linked oligosaccharides in the sperm glycocalyx. Involved in binding of sperm to oviductal epithelial cells to form a sperm reservoir until ovulation. Release from the sperm surface during capacitation and ovaluation by an elevation of oviductal fluid pH is unmasking other surface components and allows sperm to penetrate the cumulus matrix and bind to the zona pellucida of the oocyte. In vitro has antimicrobial activity and may inhibit LPS-mediated inflammation. This Hylobates lar (Lar gibbon) protein is Beta-defensin 126 (DEFB126).